The following is a 122-amino-acid chain: Large ribosomal subunit protein uL14 (122 aa).

The protein belongs to the universal ribosomal protein uL14 family. As to quaternary structure, part of the 50S ribosomal subunit. Forms a cluster with proteins L3 and L19. In the 70S ribosome, L14 and L19 interact and together make contacts with the 16S rRNA in bridges B5 and B8.

Functionally, binds to 23S rRNA. Forms part of two intersubunit bridges in the 70S ribosome. This Hahella chejuensis (strain KCTC 2396) protein is Large ribosomal subunit protein uL14.